Consider the following 191-residue polypeptide: NAD(P)H dehydrogenase (quinone) (191 aa).

One can recognise a Flavodoxin-like domain in the interval 4 to 184 (ILVIFHSITG…VAKMLGKRVA (181 aa)). Residues 10–15 (SITGNT), 83–85 (TRF), and 118–124 (SNEMPHG) contribute to the FMN site.

This sequence belongs to the WrbA family. Homodimer and homotetramer; in equilibrium. Requires FMN as cofactor.

The catalysed reaction is a quinone + NADH + H(+) = a quinol + NAD(+). It catalyses the reaction a quinone + NADPH + H(+) = a quinol + NADP(+). Functionally, it seems to function in response to environmental stress when various electron transfer chains are affected or when the environment is highly oxidizing. It reduces quinones to the hydroquinone state to prevent interaction of the semiquinone with O2 and production of superoxide. It prefers NADH over NADPH. In Archaeoglobus fulgidus (strain ATCC 49558 / DSM 4304 / JCM 9628 / NBRC 100126 / VC-16), this protein is NAD(P)H dehydrogenase (quinone).